A 289-amino-acid polypeptide reads, in one-letter code: F-actin-capping protein subunit beta (289 aa).

A disordered region spans residues 73–110 (RSPWSNQFDPPLEGGNQGGSGGDGEGDGGEGGAAGSIM). Residues 87 to 106 (GNQGGSGGDGEGDGGEGGAA) show a composition bias toward gly residues.

It belongs to the F-actin-capping protein beta subunit family. As to quaternary structure, component of the F-actin capping complex, composed of a heterodimer of an alpha and a beta subunit.

Its subcellular location is the cytoplasm. The protein resides in the cytoskeleton. It localises to the actin patch. Its function is as follows. F-actin-capping proteins bind in a Ca(2+)-independent manner to the fast growing ends of actin filaments (barbed end) thereby blocking the exchange of subunits at these ends. Unlike other capping proteins (such as gelsolin and severin), these proteins do not sever actin filaments. This Neurospora crassa (strain ATCC 24698 / 74-OR23-1A / CBS 708.71 / DSM 1257 / FGSC 987) protein is F-actin-capping protein subunit beta (fac-2).